A 353-amino-acid chain; its full sequence is Photosystem II protein D1 (353 aa).

Position 2 is an N-acetylthreonine (Thr2). Thr2 carries the phosphothreonine modification. The next 3 helical transmembrane spans lie at 29 to 46 (YIGW…TATS), 118 to 133 (HFLL…EWEL), and 142 to 156 (WIAV…AATA). A chlorophyll a-binding site is contributed by His118. Position 126 (Tyr126) interacts with pheophytin a. [CaMn4O5] cluster contacts are provided by Asp170 and Glu189. Residues 197–218 (FHMLGVAGVFGGSLFSAMHGSL) form a helical membrane-spanning segment. Residue His198 participates in chlorophyll a binding. A quinone is bound by residues His215 and 264–265 (SF). Fe cation is bound at residue His215. Residue His272 participates in Fe cation binding. Residues 274-288 (FLAAWPVVGIWFTAL) form a helical membrane-spanning segment. Positions 332, 333, 342, and 344 each coordinate [CaMn4O5] cluster. A propeptide spanning residues 345–353 (AIEAPSTNG) is cleaved from the precursor.

The protein belongs to the reaction center PufL/M/PsbA/D family. PSII is composed of 1 copy each of membrane proteins PsbA, PsbB, PsbC, PsbD, PsbE, PsbF, PsbH, PsbI, PsbJ, PsbK, PsbL, PsbM, PsbT, PsbX, PsbY, PsbZ, Psb30/Ycf12, at least 3 peripheral proteins of the oxygen-evolving complex and a large number of cofactors. It forms dimeric complexes. It depends on The D1/D2 heterodimer binds P680, chlorophylls that are the primary electron donor of PSII, and subsequent electron acceptors. It shares a non-heme iron and each subunit binds pheophytin, quinone, additional chlorophylls, carotenoids and lipids. D1 provides most of the ligands for the Mn4-Ca-O5 cluster of the oxygen-evolving complex (OEC). There is also a Cl(-1) ion associated with D1 and D2, which is required for oxygen evolution. The PSII complex binds additional chlorophylls, carotenoids and specific lipids. as a cofactor. In terms of processing, tyr-161 forms a radical intermediate that is referred to as redox-active TyrZ, YZ or Y-Z. Post-translationally, C-terminally processed by CTPA; processing is essential to allow assembly of the oxygen-evolving complex and thus photosynthetic growth.

Its subcellular location is the plastid. It localises to the chloroplast thylakoid membrane. It carries out the reaction 2 a plastoquinone + 4 hnu + 2 H2O = 2 a plastoquinol + O2. Its function is as follows. Photosystem II (PSII) is a light-driven water:plastoquinone oxidoreductase that uses light energy to abstract electrons from H(2)O, generating O(2) and a proton gradient subsequently used for ATP formation. It consists of a core antenna complex that captures photons, and an electron transfer chain that converts photonic excitation into a charge separation. The D1/D2 (PsbA/PsbD) reaction center heterodimer binds P680, the primary electron donor of PSII as well as several subsequent electron acceptors. The polypeptide is Photosystem II protein D1 (Nicotiana debneyi (Debney's tobacco)).